The primary structure comprises 337 residues: Protein RecA (337 aa).

66-73 (GPESSGKT) contacts ATP.

This sequence belongs to the RecA family.

The protein resides in the cytoplasm. Can catalyze the hydrolysis of ATP in the presence of single-stranded DNA, the ATP-dependent uptake of single-stranded DNA by duplex DNA, and the ATP-dependent hybridization of homologous single-stranded DNAs. It interacts with LexA causing its activation and leading to its autocatalytic cleavage. The sequence is that of Protein RecA from Mesomycoplasma hyopneumoniae (strain J / ATCC 25934 / NCTC 10110) (Mycoplasma hyopneumoniae).